We begin with the raw amino-acid sequence, 582 residues long: Leucine-rich repeat protein SHOC-2 (582 aa).

Composition is skewed to basic and acidic residues over residues 1 to 29 (MSSSLGKEKDSKEKDPKVPSAKEREKESK) and 36 to 57 (KESKEKEPKAKGKDAKDGKKES). Residues 1 to 88 (MSSSLGKEKD…PGTRKKSSNA (88 aa)) are disordered. The RVxF motif; important for interaction with PP1c signature appears at 63 to 66 (GVAF). 20 LRR repeats span residues 101 to 122 (NSMRLDLSKRSIHILPPSVKEL), 124 to 145 (QLTELYLYSNKLQSLPAEVGCL), 147 to 169 (NLMTLALSENSLTSLPDSLDNLK), 170 to 191 (KLRMLDLRHNKLREIPSVVYRL), 193 to 215 (SLTTLYLRFNRITTVEKDIKNLP), 216 to 237 (KLSMLSIRENKIKQLPAEIGEL), 239 to 260 (NLITLDVAHNQLEHLPKEIGNC), 262 to 283 (QITNLDLQHNDLLDLPDTIGNL), 285 to 307 (SLNRLGLRYNRLSAIPRSLAKCS), 308 to 329 (ALEELNLENNNISTLPESLLSS), 332 to 353 (KLNSLTLARNCFQLYPVGGPSQ), 356 to 377 (TIYSLNMEHNRINKIPFGIFSR), 380 to 400 (VLSKLNMKDNQLTSLPLDFGT), 403 to 424 (SMVELNLATNQLTKIPEDVSGL), 426 to 448 (SLEVLILSNNLLKKLPHGLGNLR), 449 to 470 (KLRELDLEENKLESLPNEIAYL), 472 to 494 (DLQKLVLTNNQLSTLPRGIGHLT), 495 to 516 (NLTHLGLGENLLTHLPEEIGTL), 518 to 540 (NLEELYLNDNPNLHSLPFELALC), and 542 to 563 (KLSIMSIENCPLSHLPPQIVAG).

This sequence belongs to the SHOC2 family. Component of the SHOC2-MRAS-PP1c (SMP) complex consisting of SHOC2, GTP-bound M-Ras/MRAS and the catalytic subunit of protein phosphatase 1 (either PPP1CA, PPP1CB or PPP1CC). SHOC2 and PP1c preferably bind M-Ras/MRAS, but they also bind K-Ras/KRAS, N-Ras/NRAS and H-Ras/HRAS; these interactions are GTP-dependent and both SHOC2 and PP1c are required to form a stable complex. Interacts with PP1c in the absence of Ras GTPases. Interacts with M-Ras/MRAS and RAF1. Interacts with ERBIN; disrupts the interaction with RAF1 and Ras, preventing the activation of the Ras signaling pathway. Interacts with LZTR1.

The protein resides in the cytoplasm. It localises to the nucleus. Core component of the SHOC2-MRAS-PP1c (SMP) holophosphatase complex that regulates activation of the MAPK pathway. Acts as a scaffolding protein in the SMP complex. The SMP complex specifically dephosphorylates the inhibitory phosphorylation at 'Ser-259' of RAF1 kinase, 'Ser-365' of BRAF kinase and 'Ser-214' of ARAF kinase, stimulating their kinase activities. The SMP complex enhances the dephosphorylation activity and substrate specificity of PP1c. The protein is Leucine-rich repeat protein SHOC-2 (Shoc2) of Mus musculus (Mouse).